We begin with the raw amino-acid sequence, 264 residues long: 5'-nucleotidase SurE (264 aa).

Residues Asp10, Asp11, Ser43, and Asn99 each coordinate a divalent metal cation.

Belongs to the SurE nucleotidase family. Requires a divalent metal cation as cofactor.

It localises to the cytoplasm. It carries out the reaction a ribonucleoside 5'-phosphate + H2O = a ribonucleoside + phosphate. Nucleotidase that shows phosphatase activity on nucleoside 5'-monophosphates. In Methanococcus vannielii (strain ATCC 35089 / DSM 1224 / JCM 13029 / OCM 148 / SB), this protein is 5'-nucleotidase SurE.